Reading from the N-terminus, the 395-residue chain is Crh-like protein 5 (395 aa).

Positions 1 to 19 are cleaved as a signal peptide; that stretch reads MYFKYTAAALAAVLPLCSA. Cys25 and Cys32 are disulfide-bonded. The 186-residue stretch at 45–230 folds into the GH16 domain; the sequence is ADFTSASALD…WAGGLTDYSA (186 aa). Residue Glu119 is the Nucleophile of the active site. The Proton donor role is filled by Glu123. Chitin-binding residues include Glu123, Arg203, Trp207, and Thr218. The interval 271–374 is disordered; sequence ISSSSSVTSS…PELSQGAAGS (104 aa). Low complexity-rich tracts occupy residues 272 to 338 and 348 to 364; these read SSSS…SNTG and GSSS…ASAT. N-linked (GlcNAc...) asparagine glycosylation occurs at Asn319. The GPI-like-anchor amidated glycine moiety is linked to residue Gly370. Residues 371 to 395 constitute a propeptide, removed in mature form; that stretch reads AAGSIKGSVTACALVFGAVAAVLAF.

This sequence belongs to the glycosyl hydrolase 16 family. CRH1 subfamily. In terms of processing, the GPI-like anchor contains a phosphoceramide lipid group. The anchor position has not been determined.

It localises to the cell membrane. It is found in the secreted. Its subcellular location is the cell wall. It carries out the reaction Random endo-hydrolysis of N-acetyl-beta-D-glucosaminide (1-&gt;4)-beta-linkages in chitin and chitodextrins.. Functionally, dual chitinase/transglycosylase that plays a role in cell wall architecture. Chitinase and transglycosylase activities are coupled. Required for the polysaccharide cross-linking at the septa and the cell wall. More specifically, transfers chitin to 1,6-beta-glucan in the cell wall. Chr5 shows acceptor substrate promiscuity and is also able to cross-link chitin to chitin. In Aspergillus fumigatus (strain ATCC MYA-4609 / CBS 101355 / FGSC A1100 / Af293) (Neosartorya fumigata), this protein is Crh-like protein 5.